Consider the following 354-residue polypeptide: GDSL esterase/lipase At5g03820 (354 aa).

Residues Met-1–Gly-24 form the signal peptide. Ser-37 functions as the Nucleophile in the catalytic mechanism. N-linked (GlcNAc...) asparagine glycosylation is found at Asn-66, Asn-100, Asn-237, Asn-256, Asn-257, Asn-261, and Asn-321. Residues Asp-329 and His-332 contribute to the active site.

The protein belongs to the 'GDSL' lipolytic enzyme family.

Its subcellular location is the secreted. This is GDSL esterase/lipase At5g03820 from Arabidopsis thaliana (Mouse-ear cress).